We begin with the raw amino-acid sequence, 185 residues long: Potassium-transporting ATPase KdpC subunit 2 (185 aa).

A helical membrane pass occupies residues 8-28 (LGLVLIMFVLCGFIFPLTVTA).

The protein belongs to the KdpC family. In terms of assembly, the system is composed of three essential subunits: KdpA, KdpB and KdpC.

It localises to the cell membrane. It is found in the membrane raft. Functionally, part of the high-affinity ATP-driven potassium transport (or Kdp) system, which catalyzes the hydrolysis of ATP coupled with the electrogenic transport of potassium into the cytoplasm. This subunit acts as a catalytic chaperone that increases the ATP-binding affinity of the ATP-hydrolyzing subunit KdpB by the formation of a transient KdpB/KdpC/ATP ternary complex. The protein is Potassium-transporting ATPase KdpC subunit 2 of Staphylococcus aureus (strain Mu50 / ATCC 700699).